A 384-amino-acid chain; its full sequence is Lipid-A-disaccharide synthase 1 (384 aa).

It belongs to the LpxB family.

The catalysed reaction is a lipid X + a UDP-2-N,3-O-bis[(3R)-3-hydroxyacyl]-alpha-D-glucosamine = a lipid A disaccharide + UDP + H(+). Its pathway is bacterial outer membrane biogenesis; LPS lipid A biosynthesis. In terms of biological role, condensation of UDP-2,3-diacylglucosamine and 2,3-diacylglucosamine-1-phosphate to form lipid A disaccharide, a precursor of lipid A, a phosphorylated glycolipid that anchors the lipopolysaccharide to the outer membrane of the cell. The chain is Lipid-A-disaccharide synthase 1 from Legionella pneumophila (strain Lens).